A 411-amino-acid polypeptide reads, in one-letter code: MLINHLIVVLLISLVGTGGAEDDGLCSADQKSCAQSEPDQINEDEFSFKIRRQIEKANADYKPCSSDPQDSDCSCHANVLKRDLAPYKSTGVTRQMIESSARYGTKYKIYGHRLYRDANCMFPARCEGIEHFLLPLVATLPDMDLIINTRDYPQLNAAWGNAAGGPVFSFSKTKEYRDIMYPAWTFWAGGPATKLHPRGIGRWDQMREKLEKRAAAIPWSQKRSLGFFRGSRTSDERDSLILLSRRNPELVEAQYTKNQGWKSPKDTLDAPAADEVSFEDHCKYKYLFNFRGVAASFRLKHLFLCKSLVFHVGDEWQEFFYDQLKPWVHYVPLKSYPSQQEYEHILSFFKKNDALAQEIAQRGYDFIWEHLRMKDIKCYWRKLLKRYVKLLQYEVKPEDQLIYIGPKKDEL.

Residues 1 to 20 (MLINHLIVVLLISLVGTGGA) form the signal peptide. 4 cysteine pairs are disulfide-bonded: Cys64–Cys75, Cys73–Cys378, Cys120–Cys126, and Cys282–Cys305. Asp151 (proton donor/acceptor) is an active-site residue. An interaction with the consensus sequence C-X-S-X-[PA]-C in peptide substrates region spans residues 192–197 (ATKLHP). UDP-alpha-D-glucose contacts are provided by residues 229–233 (RGSRT), Arg237, 276–278 (VSF), and 294–298 (AASFR). Positions 408 to 411 (KDEL) match the Prevents secretion from ER motif.

This sequence belongs to the glycosyltransferase 90 family.

Its subcellular location is the endoplasmic reticulum lumen. The protein operates within protein modification; protein glycosylation. In terms of biological role, protein O-glucosyltransferase. Catalyzes the reaction that attaches glucose through an O-glycosidic linkage to a conserved serine residue found in the consensus sequence C-X-S-X-[PA]-C in epidermal growth factor-like repeats. Regulates Notch signaling by glucosylating Notch in the ER, glucosylation is required for the correct folding and cleavage of Notch. This Drosophila melanogaster (Fruit fly) protein is O-glucosyltransferase rumi.